Reading from the N-terminus, the 550-residue chain is Carnitine transporter (550 aa).

A run of 12 helical transmembrane segments spans residues 15 to 35 (FLAV…AIYS), 53 to 73 (FTTP…GLAF), 92 to 112 (SWIF…WGFL), 137 to 157 (VAYS…LASI), 196 to 216 (MFLL…AVTF), 230 to 250 (FMTK…SSYV), 263 to 283 (VCLG…TQFI), 317 to 337 (WTVF…LFVT), 347 to 367 (EVIF…FGVF), 401 to 421 (LLPA…VFLA), 451 to 471 (LFWC…KAPL), and 477 to 497 (ATIV…YGLV).

It belongs to the BCCT transporter (TC 2.A.15) family.

The protein resides in the cell inner membrane. Its activity is regulated as follows. Inhibited by the protonophore 3,3',4',5-tetrachlorosalicylanilide (TCS). Not activated by osmolarity. Functionally, catalyzes the energy-dependent uptake of carnitine and is essential for growth on carnitine. Can also mediate the uptake of choline. Is probably a proton:substrate symporter. This chain is Carnitine transporter, found in Acinetobacter baumannii (strain ATCC 19606 / DSM 30007 / JCM 6841 / CCUG 19606 / CIP 70.34 / NBRC 109757 / NCIMB 12457 / NCTC 12156 / 81).